Reading from the N-terminus, the 45-residue chain is Thymosin beta-15A homolog (45 aa).

Positions 19–45 (KKTNTEEKNTLPSKETIEQEKECVKSS) are disordered. Over residues 21-45 (TNTEEKNTLPSKETIEQEKECVKSS) the composition is skewed to basic and acidic residues.

This sequence belongs to the thymosin beta family.

The protein resides in the cytoplasm. The protein localises to the cytoskeleton. Plays an important role in the organization of the cytoskeleton. Binds to and sequesters actin monomers (G actin) and therefore inhibits actin polymerization. The sequence is that of Thymosin beta-15A homolog from Coturnix japonica (Japanese quail).